The chain runs to 114 residues: Large ribosomal subunit protein uL22 (114 aa).

The protein belongs to the universal ribosomal protein uL22 family. Part of the 50S ribosomal subunit.

In terms of biological role, this protein binds specifically to 23S rRNA; its binding is stimulated by other ribosomal proteins, e.g. L4, L17, and L20. It is important during the early stages of 50S assembly. It makes multiple contacts with different domains of the 23S rRNA in the assembled 50S subunit and ribosome. Functionally, the globular domain of the protein is located near the polypeptide exit tunnel on the outside of the subunit, while an extended beta-hairpin is found that lines the wall of the exit tunnel in the center of the 70S ribosome. This chain is Large ribosomal subunit protein uL22, found in Desulfitobacterium hafniense (strain DSM 10664 / DCB-2).